A 246-amino-acid chain; its full sequence is Probable transcriptional regulatory protein ESA_01378 (246 aa).

It belongs to the TACO1 family.

Its subcellular location is the cytoplasm. This Cronobacter sakazakii (strain ATCC BAA-894) (Enterobacter sakazakii) protein is Probable transcriptional regulatory protein ESA_01378.